A 365-amino-acid chain; its full sequence is MNILFAGGGTGGHLYPAVAMAERLEQLYPGTTVAFVGTERGIEATEIPRLGYRLHLLDVRGFRRGFSFSDMLNNAGVLLDFVRAVVKAAGIIRAEQPDVVVGTGGFVSGPLLAAAELMGRKTLIQEQNAFPGVTTRFLAAFATEVHLSFEESRKFFRRKQGVFVTGNPARSFTGIDQAEAQSFFGLQPGLPTLLVFGGSRGARSINNAVKTWISGAAGKANIIWQTGSLDDERLRKEVEPSATLWIGPYINDMRMAYGAADLVLCRAGASTLAELTNLGKASVLVPYPYATGNHQFFNAKALVDAGAAELVADADIALDQSRTKVFSILADPELRLRMREACRKEGRPEAALDLAGRIAGLANIK.

Residues 10-12 (TGG), N128, R170, S199, I250, and Q295 each bind UDP-N-acetyl-alpha-D-glucosamine.

This sequence belongs to the glycosyltransferase 28 family. MurG subfamily.

Its subcellular location is the cell inner membrane. The enzyme catalyses di-trans,octa-cis-undecaprenyl diphospho-N-acetyl-alpha-D-muramoyl-L-alanyl-D-glutamyl-meso-2,6-diaminopimeloyl-D-alanyl-D-alanine + UDP-N-acetyl-alpha-D-glucosamine = di-trans,octa-cis-undecaprenyl diphospho-[N-acetyl-alpha-D-glucosaminyl-(1-&gt;4)]-N-acetyl-alpha-D-muramoyl-L-alanyl-D-glutamyl-meso-2,6-diaminopimeloyl-D-alanyl-D-alanine + UDP + H(+). It functions in the pathway cell wall biogenesis; peptidoglycan biosynthesis. Functionally, cell wall formation. Catalyzes the transfer of a GlcNAc subunit on undecaprenyl-pyrophosphoryl-MurNAc-pentapeptide (lipid intermediate I) to form undecaprenyl-pyrophosphoryl-MurNAc-(pentapeptide)GlcNAc (lipid intermediate II). The polypeptide is UDP-N-acetylglucosamine--N-acetylmuramyl-(pentapeptide) pyrophosphoryl-undecaprenol N-acetylglucosamine transferase (Prosthecochloris aestuarii (strain DSM 271 / SK 413)).